The following is a 59-amino-acid chain: Large ribosomal subunit protein bL32 (59 aa).

Residues 1 to 59 form a disordered region; that stretch reads MAVQQNRKTPSKRGMRRSHDALSGPALSVEPQTGETHRRHHVSPDGYYRGRKVMQGRED. Positions 49-59 are enriched in basic residues; that stretch reads RGRKVMQGRED.

Belongs to the bacterial ribosomal protein bL32 family.

This Alkalilimnicola ehrlichii (strain ATCC BAA-1101 / DSM 17681 / MLHE-1) protein is Large ribosomal subunit protein bL32.